The primary structure comprises 269 residues: Ribonuclease HII (269 aa).

One can recognise an RNase H type-2 domain in the interval 83 to 269 (YLIAGVDEVG…HRMSFLTNIL (187 aa)). Positions 89, 90, and 185 each coordinate a divalent metal cation.

This sequence belongs to the RNase HII family. Mn(2+) serves as cofactor. Requires Mg(2+) as cofactor.

The protein resides in the cytoplasm. The enzyme catalyses Endonucleolytic cleavage to 5'-phosphomonoester.. Endonuclease that specifically degrades the RNA of RNA-DNA hybrids. The polypeptide is Ribonuclease HII (Clostridium botulinum (strain ATCC 19397 / Type A)).